A 427-amino-acid chain; its full sequence is Gamma-glutamyl phosphate reductase (427 aa).

It belongs to the gamma-glutamyl phosphate reductase family.

It is found in the cytoplasm. It carries out the reaction L-glutamate 5-semialdehyde + phosphate + NADP(+) = L-glutamyl 5-phosphate + NADPH + H(+). It participates in amino-acid biosynthesis; L-proline biosynthesis; L-glutamate 5-semialdehyde from L-glutamate: step 2/2. In terms of biological role, catalyzes the NADPH-dependent reduction of L-glutamate 5-phosphate into L-glutamate 5-semialdehyde and phosphate. The product spontaneously undergoes cyclization to form 1-pyrroline-5-carboxylate. In Bifidobacterium adolescentis (strain ATCC 15703 / DSM 20083 / NCTC 11814 / E194a), this protein is Gamma-glutamyl phosphate reductase.